The chain runs to 135 residues: Large ribosomal subunit protein uL16 (135 aa).

Belongs to the universal ribosomal protein uL16 family. As to quaternary structure, part of the 50S ribosomal subunit.

Its function is as follows. Binds 23S rRNA and is also seen to make contacts with the A and possibly P site tRNAs. The protein is Large ribosomal subunit protein uL16 (rplP) of Carsonella ruddii (strain PV).